A 505-amino-acid chain; its full sequence is ATP synthase subunit alpha (505 aa).

171–178 (GDRQTGKT) provides a ligand contact to ATP.

The protein belongs to the ATPase alpha/beta chains family. In terms of assembly, F-type ATPases have 2 components, CF(1) - the catalytic core - and CF(0) - the membrane proton channel. CF(1) has five subunits: alpha(3), beta(3), gamma(1), delta(1), epsilon(1). CF(0) has three main subunits: a(1), b(2) and c(9-12). The alpha and beta chains form an alternating ring which encloses part of the gamma chain. CF(1) is attached to CF(0) by a central stalk formed by the gamma and epsilon chains, while a peripheral stalk is formed by the delta and b chains.

The protein resides in the cell inner membrane. The enzyme catalyses ATP + H2O + 4 H(+)(in) = ADP + phosphate + 5 H(+)(out). Functionally, produces ATP from ADP in the presence of a proton gradient across the membrane. The alpha chain is a regulatory subunit. This chain is ATP synthase subunit alpha, found in Nitratiruptor sp. (strain SB155-2).